The primary structure comprises 517 residues: Quinol oxidase subunit 1 (517 aa).

12 helical membrane passes run 19–39 (VVWL…IAAM), 64–84 (IHGW…VIGF), 98–118 (QMAI…AGSP), 150–170 (MAYL…VTLI), 185–205 (IFAA…PALA), 226–246 (WAIL…FPLF), 271–291 (IYLL…TWPL), 303–323 (TLIL…TIFT), 333–353 (VGMG…QALV), 369–389 (VVGH…TTVF), 412–432 (IGMI…SVAG), and 460–480 (IGIP…LAYA). Residue histidine 65 coordinates Fe(II)-heme a. Residues histidine 235, tyrosine 239, histidine 284, and histidine 285 each coordinate Cu cation. A cross-link (1'-histidyl-3'-tyrosine (His-Tyr)) is located at residues 235 to 239 (HPVVY). Histidine 372 contacts heme a3. Histidine 374 is a Fe(II)-heme a binding site.

Belongs to the heme-copper respiratory oxidase family.

It localises to the cell membrane. The catalysed reaction is 2 a quinol + O2 = 2 a quinone + 2 H2O. Functionally, catalyzes the reduction of oxygen to water. In terms of biological role, subunits I, II and III form the functional core of the enzyme complex. Electrons originating in caldariella quinol are transferred to the binuclear center formed by heme A3 and Cu(B). Subunit I binds heme a and the bimetallic center. The chain is Quinol oxidase subunit 1 (soxB) from Sulfolobus acidocaldarius (strain ATCC 33909 / DSM 639 / JCM 8929 / NBRC 15157 / NCIMB 11770).